Here is a 282-residue protein sequence, read N- to C-terminus: Pantothenate synthetase (282 aa).

32–39 contacts ATP; sequence MGALHEGH. His39 (proton donor) is an active-site residue. Gln63 is a binding site for (R)-pantoate. Gln63 contacts beta-alanine. An ATP-binding site is contributed by 149-152; it reads GEKD. Gln155 contributes to the (R)-pantoate binding site. Residues Val178 and 186–189 contribute to the ATP site; that span reads LSSR.

The protein belongs to the pantothenate synthetase family. In terms of assembly, homodimer.

It is found in the cytoplasm. The enzyme catalyses (R)-pantoate + beta-alanine + ATP = (R)-pantothenate + AMP + diphosphate + H(+). The protein operates within cofactor biosynthesis; (R)-pantothenate biosynthesis; (R)-pantothenate from (R)-pantoate and beta-alanine: step 1/1. Catalyzes the condensation of pantoate with beta-alanine in an ATP-dependent reaction via a pantoyl-adenylate intermediate. This chain is Pantothenate synthetase, found in Paracoccus denitrificans (strain Pd 1222).